Reading from the N-terminus, the 356-residue chain is Photosystem II protein D1 (356 aa).

The next 3 membrane-spanning stretches (helical) occupy residues 29–46 (YVGWFGTLMIPTLLTATT), 118–133 (HFLIGIFCYMGRQWEL), and 142–156 (WICVAYSAPVSAATA). His-118 is a chlorophyll a binding site. Residue Tyr-126 participates in pheophytin a binding. Positions 170 and 189 each coordinate [CaMn4O5] cluster. Residues 197-218 (FHMLGVAGVFGGSLFSAMHGSL) form a helical membrane-spanning segment. His-198 serves as a coordination point for chlorophyll a. Residues His-215 and 264–265 (SF) contribute to the a quinone site. His-215 contributes to the Fe cation binding site. Residue His-272 coordinates Fe cation. The chain crosses the membrane as a helical span at residues 274–288 (FLGAWPVIGIWFTAM). Residues His-332, Glu-333, Asp-342, and Ala-344 each contribute to the [CaMn4O5] cluster site. The propeptide occupies 345 to 356 (SAEPVSAPVING).

It belongs to the reaction center PufL/M/PsbA/D family. PSII is composed of 1 copy each of membrane proteins PsbA, PsbB, PsbC, PsbD, PsbE, PsbF, PsbH, PsbI, PsbJ, PsbK, PsbL, PsbM, PsbT, PsbX, PsbY, PsbZ, Psb30/Ycf12, peripheral proteins PsbO, CyanoQ (PsbQ), PsbU, PsbV and a large number of cofactors. It forms dimeric complexes. It depends on The D1/D2 heterodimer binds P680, chlorophylls that are the primary electron donor of PSII, and subsequent electron acceptors. It shares a non-heme iron and each subunit binds pheophytin, quinone, additional chlorophylls, carotenoids and lipids. D1 provides most of the ligands for the Mn4-Ca-O5 cluster of the oxygen-evolving complex (OEC). There is also a Cl(-1) ion associated with D1 and D2, which is required for oxygen evolution. The PSII complex binds additional chlorophylls, carotenoids and specific lipids. as a cofactor. In terms of processing, tyr-161 forms a radical intermediate that is referred to as redox-active TyrZ, YZ or Y-Z. C-terminally processed by CtpA; processing is essential to allow assembly of the oxygen-evolving complex and thus photosynthetic growth.

The protein resides in the cellular thylakoid membrane. The enzyme catalyses 2 a plastoquinone + 4 hnu + 2 H2O = 2 a plastoquinol + O2. Photosystem II (PSII) is a light-driven water:plastoquinone oxidoreductase that uses light energy to abstract electrons from H(2)O, generating O(2) and a proton gradient subsequently used for ATP formation. It consists of a core antenna complex that captures photons, and an electron transfer chain that converts photonic excitation into a charge separation. The D1/D2 (PsbA/PsbD) reaction center heterodimer binds P680, the primary electron donor of PSII as well as several subsequent electron acceptors. In Crocosphaera subtropica (strain ATCC 51142 / BH68) (Cyanothece sp. (strain ATCC 51142)), this protein is Photosystem II protein D1.